Reading from the N-terminus, the 410-residue chain is Peptidase T (410 aa).

His-77 is a binding site for Zn(2+). Asp-79 is a catalytic residue. Residue Asp-140 coordinates Zn(2+). Glu-174 acts as the Proton acceptor in catalysis. Positions 175, 197, and 379 each coordinate Zn(2+).

This sequence belongs to the peptidase M20B family. Requires Zn(2+) as cofactor.

Its subcellular location is the cytoplasm. The catalysed reaction is Release of the N-terminal residue from a tripeptide.. In terms of biological role, cleaves the N-terminal amino acid of tripeptides. The chain is Peptidase T from Desulfitobacterium hafniense (strain Y51).